The chain runs to 383 residues: Putative protein FAM157A (383 aa).

Disordered stretches follow at residues 1–21 and 177–254; these read MGPL…PLPK and ATAR…PLGR.

It belongs to the FAM157 family.

The chain is Putative protein FAM157A (FAM157A) from Homo sapiens (Human).